The chain runs to 694 residues: Polyphosphate kinase (694 aa).

N45 provides a ligand contact to ATP. Positions 367 and 397 each coordinate Mg(2+). Catalysis depends on H427, which acts as the Phosphohistidine intermediate. ATP contacts are provided by Y460, R553, and H580.

This sequence belongs to the polyphosphate kinase 1 (PPK1) family. Requires Mg(2+) as cofactor. An intermediate of this reaction is the autophosphorylated ppk in which a phosphate is covalently linked to a histidine residue through a N-P bond.

The enzyme catalyses [phosphate](n) + ATP = [phosphate](n+1) + ADP. Functionally, catalyzes the reversible transfer of the terminal phosphate of ATP to form a long-chain polyphosphate (polyP). The polypeptide is Polyphosphate kinase (Campylobacter jejuni subsp. doylei (strain ATCC BAA-1458 / RM4099 / 269.97)).